The sequence spans 121 residues: Large ribosomal subunit protein bL19 (121 aa).

Belongs to the bacterial ribosomal protein bL19 family.

In terms of biological role, this protein is located at the 30S-50S ribosomal subunit interface and may play a role in the structure and function of the aminoacyl-tRNA binding site. This Chlamydia muridarum (strain MoPn / Nigg) protein is Large ribosomal subunit protein bL19 (rplS).